A 200-amino-acid chain; its full sequence is Pyridoxal 5'-phosphate synthase subunit PdxT (200 aa).

An L-glutamine-binding site is contributed by 52–54 (GES). The active-site Nucleophile is Cys-84. L-glutamine is bound by residues Arg-116 and 145 to 146 (IR). Residues His-181 and Glu-183 each act as charge relay system in the active site.

This sequence belongs to the glutaminase PdxT/SNO family. In the presence of PdxS, forms a dodecamer of heterodimers. Only shows activity in the heterodimer.

It carries out the reaction aldehydo-D-ribose 5-phosphate + D-glyceraldehyde 3-phosphate + L-glutamine = pyridoxal 5'-phosphate + L-glutamate + phosphate + 3 H2O + H(+). The catalysed reaction is L-glutamine + H2O = L-glutamate + NH4(+). It participates in cofactor biosynthesis; pyridoxal 5'-phosphate biosynthesis. Functionally, catalyzes the hydrolysis of glutamine to glutamate and ammonia as part of the biosynthesis of pyridoxal 5'-phosphate. The resulting ammonia molecule is channeled to the active site of PdxS. This Saccharolobus islandicus (strain L.S.2.15 / Lassen #1) (Sulfolobus islandicus) protein is Pyridoxal 5'-phosphate synthase subunit PdxT.